Reading from the N-terminus, the 310-residue chain is p-hydroxybenzoic acid efflux pump subunit AaeA (310 aa).

The chain crosses the membrane as a helical span at residues 12–32 (AITVVLVILAFIAIFNAWVYY).

This sequence belongs to the membrane fusion protein (MFP) (TC 8.A.1) family.

It localises to the cell inner membrane. In terms of biological role, forms an efflux pump with AaeB. The sequence is that of p-hydroxybenzoic acid efflux pump subunit AaeA from Shigella sonnei (strain Ss046).